The following is a 416-amino-acid chain: Tumor necrosis factor receptor superfamily member 16 (416 aa).

Positions 1-19 (MAGFVPLLLLLLPAGPTWG) are cleaved as a signal peptide. 4 TNFR-Cys repeats span residues 23 to 57 (KCLT…TVCE), 58 to 99 (PCLD…DAVC), 100 to 138 (RCAY…DTVC), and 140 to 180 (ECPE…DAEC). Disulfide bonds link cysteine 24–cysteine 35, cysteine 36–cysteine 49, cysteine 39–cysteine 56, cysteine 59–cysteine 75, cysteine 78–cysteine 91, cysteine 81–cysteine 99, cysteine 101–cysteine 114, cysteine 117–cysteine 130, cysteine 120–cysteine 138, cysteine 141–cysteine 156, cysteine 159–cysteine 172, and cysteine 162–cysteine 180. The Extracellular segment spans residues 29–239 (YTTSGECCKA…PVVSRGTADN (211 aa)). Asparagine 52 is a glycosylation site (N-linked (GlcNAc...) asparagine). A helical membrane pass occupies residues 240-261 (LIPVYCSILAAVVVGLVAYIAF). Topologically, residues 262–416 (KRWNSCKQNK…YSESTATSPV (155 aa)) are cytoplasmic. Polar residues-rich tracts occupy residues 270-284 (NKQG…QTPS) and 294-315 (SGIS…STQG). Residues 270-328 (NKQGANNRPVNQTPSPEGEKLHSDSGISVDSQSLHDQQPPNQSTQGPAPKGDGSLYASL) form a disordered region. The region spanning 333 to 410 (QEEVEKLLSS…DIAESLYSES (78 aa)) is the Death domain.

Homodimer; disulfide-linked. Heterodimer with SORCS2. The extracellular domains of the heterodimer bind NGF. In terms of processing, N- and O-glycosylated. Phosphorylated on serine residues. Detected in embryonic dorsal root ganglion and retina.

The protein localises to the cell membrane. It localises to the perikaryon. The protein resides in the cell projection. It is found in the growth cone. Its subcellular location is the dendritic spine. In terms of biological role, low affinity receptor which can bind to NGF, BDNF, NTF3, and NTF4. Forms a heterodimeric receptor with SORCS2 that binds the precursor forms of NGF, BDNF and NTF3 with high affinity, and has much lower affinity for mature NGF and BDNF. Plays an important role in differentiation and survival of specific neuronal populations during development. Can mediate cell survival as well as cell death of neural cells. Plays a role in the inactivation of RHOA. Necessary for the circadian oscillation of clock genes in the suprachiasmatic nucleus (SCmgetaN) of the brain and in liver and of the genes involved in glucose and lipid metabolism in the liver. The protein is Tumor necrosis factor receptor superfamily member 16 (NGFR) of Gallus gallus (Chicken).